The chain runs to 269 residues: 2-dehydro-3-deoxyphosphooctonate aldolase (269 aa).

The protein belongs to the KdsA family.

It is found in the cytoplasm. The enzyme catalyses D-arabinose 5-phosphate + phosphoenolpyruvate + H2O = 3-deoxy-alpha-D-manno-2-octulosonate-8-phosphate + phosphate. Its pathway is carbohydrate biosynthesis; 3-deoxy-D-manno-octulosonate biosynthesis; 3-deoxy-D-manno-octulosonate from D-ribulose 5-phosphate: step 2/3. The protein operates within bacterial outer membrane biogenesis; lipopolysaccharide biosynthesis. The polypeptide is 2-dehydro-3-deoxyphosphooctonate aldolase (Chlamydia abortus (strain DSM 27085 / S26/3) (Chlamydophila abortus)).